We begin with the raw amino-acid sequence, 278 residues long: Extracellular metalloprotease GLRG_06511 (278 aa).

The first 19 residues, 1–19, serve as a signal peptide directing secretion; that stretch reads MQFKSLLVSALAAASTALA. A glycan (N-linked (GlcNAc...) asparagine) is linked at Asn-51. His-190 lines the Zn(2+) pocket. Glu-191 is a catalytic residue. Residue His-194 participates in Zn(2+) binding. A disulfide bridge connects residues Cys-227 and Cys-254.

Belongs to the peptidase M43B family.

Its subcellular location is the secreted. Functionally, secreted metalloproteinase that allows assimilation of proteinaceous substrates. The protein is Extracellular metalloprotease GLRG_06511 of Colletotrichum graminicola (strain M1.001 / M2 / FGSC 10212) (Maize anthracnose fungus).